Here is a 156-residue protein sequence, read N- to C-terminus: uncharacterized protein (156 aa).

In terms of domain architecture, N-acetyltransferase spans 11–156 (EEFRSYLTYT…ETDVVMSKKL (146 aa)).

It belongs to the acetyltransferase family. As to quaternary structure, homodimer.

This is an uncharacterized protein from Bacillus subtilis (strain 168).